The primary structure comprises 193 residues: uncharacterized protein (193 aa).

Residues 55–94 form a disordered region; the sequence is PVGGAAGARSLSQALPAPAPPPPPPPGLGPSSERPWPSPW. Pro residues predominate over residues 71 to 82; the sequence is APAPPPPPPPGL.

This is an uncharacterized protein from Homo sapiens (Human).